The primary structure comprises 162 residues: UPF0114 protein PFLU_5318 (162 aa).

A run of 3 helical transmembrane segments spans residues 15–35 (LLAP…LKFF), 53–73 (LILV…LVMV), and 136–156 (LMWY…MGYL).

This sequence belongs to the UPF0114 family.

Its subcellular location is the cell membrane. The sequence is that of UPF0114 protein PFLU_5318 from Pseudomonas fluorescens (strain SBW25).